The chain runs to 426 residues: DNA polymerase processivity factor component OPG148 (426 aa).

The protein belongs to the orthopoxvirus OPG148 family. As to quaternary structure, interacts with the DNA polymerase catalytic subunit OPG071. Interacts with UDG/OPG116. Component of the uracil-DNA glycosylase(UDG)-OPG148-polymerase complex; OPG148 and UDG form a heterodimeric processivity factor that associates with OPG071 to form the processive polymerase holoenzyme. Interacts with OPG117.

In terms of biological role, plays an essential role in viral DNA replication by acting as the polymerase processivity factor together with protein OPG116. Serves as a bridge which links the DNA polymerase OPG071 and the uracil DNA glycosylase. This is DNA polymerase processivity factor component OPG148 (OPG148) from Vaccinia virus (strain Copenhagen) (VACV).